The sequence spans 488 residues: Monothiol glutaredoxin-S17 (488 aa).

The Thioredoxin domain occupies 2 to 107; it reads SGTVKDIVSK…LANKVGKVAG (106 aa). 3 Glutaredoxin domains span residues 154-256, 284-386, and 391-488; these read KSRL…GITT, RARL…GITG, and EDRL…TLSE. Lysine 408 contributes to the glutathione binding site. Cysteine 416 serves as a coordination point for [2Fe-2S] cluster. Residues arginine 445, phenylalanine 457, and 470–471 each bind glutathione; that span reads CD.

Belongs to the glutaredoxin family. CGFS subfamily. In terms of assembly, [2Fe-2S]-bridged holo-homodimer. Interacts in vitro with SUFE1, BOLA1, BOLA2 and BOLA4. Interacts in vivo only with BOLA2. Interacts with RGLG3 and RGLG4. Ubiquitinated at Lys-154. Polyubiquitinated by RGLG3 and RGLG4. Polyubiquitination of GRXS17 leads to its degradation by the proteasome.

The protein resides in the cytoplasm. Functionally, may only reduce GSH-thiol disulfides, but not protein disulfides. Participates probably to the maturation of iron-sulfur proteins and to the regulation of the redox state of the BOLA proteins. The GRXS17-BOLA2 heterodimer binds a labile, oxygen sensitive iron-sulfur cluster. In Arabidopsis thaliana (Mouse-ear cress), this protein is Monothiol glutaredoxin-S17.